The following is a 184-amino-acid chain: Elongation factor P (184 aa).

This sequence belongs to the elongation factor P family.

It is found in the cytoplasm. It participates in protein biosynthesis; polypeptide chain elongation. In terms of biological role, involved in peptide bond synthesis. Stimulates efficient translation and peptide-bond synthesis on native or reconstituted 70S ribosomes in vitro. Probably functions indirectly by altering the affinity of the ribosome for aminoacyl-tRNA, thus increasing their reactivity as acceptors for peptidyl transferase. This Polaromonas sp. (strain JS666 / ATCC BAA-500) protein is Elongation factor P.